Reading from the N-terminus, the 373-residue chain is C-C chemokine receptor type 2 (373 aa).

Over 1 to 55 (MEDNNMLPQFIHGILSTSHSLFTRSIQELDEGATTPYDYDDGEPCHKTSVKQIGA) the chain is Extracellular. The helical transmembrane segment at 56–83 (WILPPLYSLVFIFGFVGNMLVIIILIGC) threads the bilayer. The Cytoplasmic portion of the chain corresponds to 84-93 (KKLKSMTDIY). A helical transmembrane segment spans residues 94–114 (LLNLAISDLLFLLTLPFWAHY). Residues 115–127 (AANEWVFGNIMCK) lie on the Extracellular side of the membrane. A disulfide bridge links C126 with C203. The helical transmembrane segment at 128 to 149 (VFTGLYHIGYFGGIFFIILLTI) threads the bilayer. Residues 150-166 (DRYLAIVHAVFALKART) are Cytoplasmic-facing. A Phosphotyrosine; by JAK2 modification is found at Y152. Residues 167 to 191 (VTFGVITSVVTWVVAVFASLPGIIF) form a helical membrane-spanning segment. The Extracellular portion of the chain corresponds to 192–219 (TKSKQDDHHYTCGPYFTQLWKNFQTIMR). The chain crosses the membrane as a helical span at residues 220–239 (NILSLILPLLVMVICYSGIL). Residues 240–256 (HTLFRCRNEKKRHRAVR) lie on the Cytoplasmic side of the membrane. Residues 257-281 (LIFAIMIVYFLFWTPYNIVLFLTTF) traverse the membrane as a helical segment. Over 282 to 298 (QESLGMSNCVIDKHLDQ) the chain is Extracellular. A helical transmembrane segment spans residues 299 to 322 (AMQVTETLGMTHCCINPVIYAFVG). The Cytoplasmic portion of the chain corresponds to 323–373 (EKFRRYLSIFFRKHIAKRLCKQCPVFYRETADRVSSTFTPSTGEQEVSVGL).

Belongs to the G-protein coupled receptor 1 family. In terms of assembly, interacts with ARRB1. Interacts (via extracellular N-terminal region) with beta-defensin DEFB106A/DEFB106B; this interaction may preferentially require specific tyrosine sulfation on CCR2. Interacts with NUP85; the interaction is required for CCR2 clusters formation on the cell membrane and CCR2 signaling. In terms of processing, N-glycosylated. Post-translationally, sulfation increases the affinity for both monomeric and dimeric CCL2 with stronger binding to the monomeric form. Binding of sulfated CCR2 to CCL2 promotes conversion of CCL2 from dimer to monomer. Epressed in mature thymocytes. Detected in monocyte/macrophage cell lines, but not in nonhematopoietic cell lines.

It is found in the cell membrane. Functionally, key functional receptor for CCL2 but can also bind CCL7 and CCL12 chemokines. Its binding with CCL2 on monocytes and macrophages mediates chemotaxis and migration induction through the activation of the PI3K cascade, the small G protein Rac and lamellipodium protrusion. Also acts as a receptor for the beta-defensin DEFB106A/DEFB106B. Regulates the expression of T-cell inflammatory cytokines and T-cell differentiation, promoting the differentiation of T-cells into T-helper 17 cells (Th17) during inflammation. Facilitates the export of mature thymocytes by enhancing directional movement of thymocytes to sphingosine-1-phosphate stimulation and up-regulation of S1P1R expression; signals through the JAK-STAT pathway to regulate FOXO1 activity leading to an increased expression of S1P1R. Plays an important role in mediating peripheral nerve injury-induced neuropathic pain. Increases NMDA-mediated synaptic transmission in both dopamine D1 and D2 receptor-containing neurons, which may be caused by MAPK/ERK-dependent phosphorylation of GRIN2B/NMDAR2B. Mediates the recruitment of macrophages and monocytes to the injury site following brain injury. The polypeptide is C-C chemokine receptor type 2 (Ccr2) (Mus musculus (Mouse)).